Consider the following 89-residue polypeptide: Small ribosomal subunit protein uS15 (89 aa).

The protein belongs to the universal ribosomal protein uS15 family. In terms of assembly, part of the 30S ribosomal subunit. Forms a bridge to the 50S subunit in the 70S ribosome, contacting the 23S rRNA.

Functionally, one of the primary rRNA binding proteins, it binds directly to 16S rRNA where it helps nucleate assembly of the platform of the 30S subunit by binding and bridging several RNA helices of the 16S rRNA. In terms of biological role, forms an intersubunit bridge (bridge B4) with the 23S rRNA of the 50S subunit in the ribosome. This chain is Small ribosomal subunit protein uS15, found in Rippkaea orientalis (strain PCC 8801 / RF-1) (Cyanothece sp. (strain PCC 8801)).